The following is a 110-amino-acid chain: Integration host factor subunit alpha (110 aa).

Belongs to the bacterial histone-like protein family. As to quaternary structure, heterodimer of an alpha and a beta chain.

Its function is as follows. This protein is one of the two subunits of integration host factor, a specific DNA-binding protein that functions in genetic recombination as well as in transcriptional and translational control. The sequence is that of Integration host factor subunit alpha from Delftia acidovorans (strain DSM 14801 / SPH-1).